Reading from the N-terminus, the 114-residue chain is Small ribosomal subunit protein uS15 (114 aa).

This sequence belongs to the universal ribosomal protein uS15 family.

In Musca domestica (House fly), this protein is Small ribosomal subunit protein uS15 (RpS13).